The primary structure comprises 95 residues: Bombyxin C-2 (95 aa).

An N-terminal signal peptide occupies residues 1-19 (MKLVILLVVVSAMLVLGGA). Glutamine 20 bears the Pyrrolidone carboxylic acid mark. Disulfide bonds link cysteine 27–cysteine 76, cysteine 39–cysteine 89, and cysteine 75–cysteine 80. Positions 47 to 67 (SGSQYAGYGWPWLPPFSSSRG) are cleaved as a propeptide — c peptide like.

Belongs to the insulin family. Heterodimer of a B chain and an A chain linked by two disulfide bonds.

The protein localises to the secreted. Functionally, brain peptide responsible for activation of prothoracic glands to produce ecdysone in insects. The polypeptide is Bombyxin C-2 (BBXC2) (Bombyx mori (Silk moth)).